We begin with the raw amino-acid sequence, 268 residues long: Glutamate racemase (268 aa).

Substrate contacts are provided by residues 10–11 (DS) and 42–43 (YG). Residue Cys73 is the Proton donor/acceptor of the active site. 74–75 (NT) provides a ligand contact to substrate. Cys184 (proton donor/acceptor) is an active-site residue. Substrate is bound at residue 185-186 (TH).

This sequence belongs to the aspartate/glutamate racemases family.

The catalysed reaction is L-glutamate = D-glutamate. It participates in cell wall biogenesis; peptidoglycan biosynthesis. Its function is as follows. Provides the (R)-glutamate required for cell wall biosynthesis. This Carnobacterium sp. (strain St2) protein is Glutamate racemase.